We begin with the raw amino-acid sequence, 538 residues long: Putative cysteine ligase BshC (538 aa).

Residues 460–484 (KINEQIELLERMLKRNVEKKHEVEL) are a coiled coil.

This sequence belongs to the BshC family.

Involved in bacillithiol (BSH) biosynthesis. May catalyze the last step of the pathway, the addition of cysteine to glucosamine malate (GlcN-Mal) to generate BSH. This is Putative cysteine ligase BshC from Bacillus cereus (strain AH820).